The primary structure comprises 160 residues: Deoxyuridine 5'-triphosphate nucleotidohydrolase (160 aa).

Residues 72–74, Asn-85, and 89–91 contribute to the substrate site; these read RSG and TID.

This sequence belongs to the dUTPase family. It depends on Mg(2+) as a cofactor.

It carries out the reaction dUTP + H2O = dUMP + diphosphate + H(+). The protein operates within pyrimidine metabolism; dUMP biosynthesis; dUMP from dCTP (dUTP route): step 2/2. In terms of biological role, this enzyme is involved in nucleotide metabolism: it produces dUMP, the immediate precursor of thymidine nucleotides and it decreases the intracellular concentration of dUTP so that uracil cannot be incorporated into DNA. The chain is Deoxyuridine 5'-triphosphate nucleotidohydrolase from Methylocella silvestris (strain DSM 15510 / CIP 108128 / LMG 27833 / NCIMB 13906 / BL2).